The sequence spans 237 residues: uncharacterized protein (237 aa).

The region spanning 4 to 237 is the GP-PDE domain; the sequence is QFLIAHRGYS…VKFQIAAQLY (234 aa).

To glycerophosphoryl diester phosphodiesterases (EC 3.1.4.46). This sequence to M.genitalium MG293.

This is an uncharacterized protein from Mycoplasma pneumoniae (strain ATCC 29342 / M129 / Subtype 1) (Mycoplasmoides pneumoniae).